The sequence spans 212 residues: Large ribosomal subunit protein uL3 (212 aa).

Residues 136 to 155 (THGNSLSHRSNGSIGQNQTP) are disordered. Q153 is modified (N5-methylglutamine).

This sequence belongs to the universal ribosomal protein uL3 family. Part of the 50S ribosomal subunit. Forms a cluster with proteins L14 and L19. Methylated by PrmB.

In terms of biological role, one of the primary rRNA binding proteins, it binds directly near the 3'-end of the 23S rRNA, where it nucleates assembly of the 50S subunit. This chain is Large ribosomal subunit protein uL3, found in Shewanella oneidensis (strain ATCC 700550 / JCM 31522 / CIP 106686 / LMG 19005 / NCIMB 14063 / MR-1).